We begin with the raw amino-acid sequence, 350 residues long: Putative ATP-binding protein BRA0745/BS1330_II0738 (350 aa).

In terms of domain architecture, ABC transporter spans 4-234 (VSLRGISKTF…PANKFVAGFI (231 aa)). 36-43 (GPSGCGKS) contributes to the ATP binding site.

It belongs to the ABC transporter superfamily. The complex is composed of two ATP-binding proteins (BRA0745), two transmembrane proteins (BRA0749) and a solute-binding protein (BRA0748).

It localises to the cell inner membrane. Functionally, probably part of an ABC transporter complex. Probably responsible for energy coupling to the transport system. This chain is Putative ATP-binding protein BRA0745/BS1330_II0738, found in Brucella suis biovar 1 (strain 1330).